We begin with the raw amino-acid sequence, 222 residues long: MNIAKYIDHTLLKADATKQDIKKICDEAREQGFYSVCVNGANVAYAHSLLTGTDVKVAAVVGFPLGAMTTEAKVFETSDVIAKGAQEIDMVINIAALKEGNDAEIIKDIKAVVDIANGKAIVKVIIEACLLSQEEKIRACQLAKEAGAHFVKTSTGFSTGGATVEDIKLMRETVGPEIGVKGSGGIRDLKTALAMIEAGATRIGASASVSIVNDEKDNTAGY.

The active-site Proton donor/acceptor is the D89. The Schiff-base intermediate with acetaldehyde role is filled by K152. Residue K181 is the Proton donor/acceptor of the active site.

This sequence belongs to the DeoC/FbaB aldolase family. DeoC type 1 subfamily.

It is found in the cytoplasm. The catalysed reaction is 2-deoxy-D-ribose 5-phosphate = D-glyceraldehyde 3-phosphate + acetaldehyde. It participates in carbohydrate degradation; 2-deoxy-D-ribose 1-phosphate degradation; D-glyceraldehyde 3-phosphate and acetaldehyde from 2-deoxy-alpha-D-ribose 1-phosphate: step 2/2. Catalyzes a reversible aldol reaction between acetaldehyde and D-glyceraldehyde 3-phosphate to generate 2-deoxy-D-ribose 5-phosphate. The sequence is that of Deoxyribose-phosphate aldolase from Alkaliphilus oremlandii (strain OhILAs) (Clostridium oremlandii (strain OhILAs)).